Consider the following 299-residue polypeptide: Hairy/enhancer-of-split related with YRPW motif protein 1 (299 aa).

The segment at 1 to 53 (MKRAHPDYSSSDSELDETIEVEKESADENGNLSSALCSMSPTTSSQVLARKRR) is disordered. Over residues 28–47 (ENGNLSSALCSMSPTTSSQV) the composition is skewed to polar residues. Residues 48–117 (LARKRRRGII…GGKGYFDAHA (70 aa)) are transcriptional repression and interaction with NCOR1 and SIN3A. The bHLH domain occupies 49–104 (ARKRRRGIIEKRRRDRINNSLSELRRLVPSAFEKQGSAKLEKAEILQMTVDHLKML). Residues 122-158 (YRSLGFRECLAEVARYLSIIEGLDASDPLLVRLVSHL) form the Orange domain. The tract at residues 194–234 (LLLPQNGHGNAGTAASPTEPHHQGRLASAHPEAPALRAPPS) is disordered. The YRPW motif signature appears at 289–292 (YRPW).

It belongs to the HEY family. As to quaternary structure, may self-associate. Interacts with HES1, NCOR1 and SIN3A. Interacts with GATA4, GATA6 and HDAC1 and HEYL. Interacts with CCDC89/BOIP. As to expression, expressed in somitic mesoderm, brain, central nervous system, kidney, heart, nasal epithelium, limbs, lung, muscle, ovary and testis.

Its subcellular location is the nucleus. Functionally, transcriptional repressor which binds preferentially to the canonical E box sequence 5'-CACGTG-3'. Downstream effector of Notch signaling required for cardiovascular development. Specifically required for the Notch-induced endocardial epithelial to mesenchymal transition, which is itself criticial for cardiac valve and septum development. May be required in conjunction with HEY2 to specify arterial cell fate or identity. Promotes maintenance of neuronal precursor cells and glial versus neuronal fate specification. Represses transcription by the cardiac transcriptional activators GATA4 and GATA6 and by the neuronal bHLH factors ASCL1/MASH1 and NEUROD4/MATH3. The protein is Hairy/enhancer-of-split related with YRPW motif protein 1 (Hey1) of Mus musculus (Mouse).